The sequence spans 69 residues: Small, acid-soluble spore protein C4 (69 aa).

This sequence belongs to the alpha/beta-type SASP family.

Functionally, SASP are bound to spore DNA. They are double-stranded DNA-binding proteins that cause DNA to change to an a-like conformation. They protect the DNA backbone from chemical and enzymatic cleavage and are thus involved in dormant spore's high resistance to UV light. The polypeptide is Small, acid-soluble spore protein C4 (SASP-C4) (Priestia megaterium (Bacillus megaterium)).